The following is a 292-amino-acid chain: 4-hydroxy-tetrahydrodipicolinate synthase 2 (292 aa).

Thr-46 provides a ligand contact to pyruvate. Tyr-134 (proton donor/acceptor) is an active-site residue. Lys-162 serves as the catalytic Schiff-base intermediate with substrate. Val-204 lines the pyruvate pocket.

It belongs to the DapA family. Homotetramer; dimer of dimers.

It localises to the cytoplasm. The catalysed reaction is L-aspartate 4-semialdehyde + pyruvate = (2S,4S)-4-hydroxy-2,3,4,5-tetrahydrodipicolinate + H2O + H(+). It functions in the pathway amino-acid biosynthesis; L-lysine biosynthesis via DAP pathway; (S)-tetrahydrodipicolinate from L-aspartate: step 3/4. In terms of biological role, catalyzes the condensation of (S)-aspartate-beta-semialdehyde [(S)-ASA] and pyruvate to 4-hydroxy-tetrahydrodipicolinate (HTPA). The polypeptide is 4-hydroxy-tetrahydrodipicolinate synthase 2 (Halalkalibacterium halodurans (strain ATCC BAA-125 / DSM 18197 / FERM 7344 / JCM 9153 / C-125) (Bacillus halodurans)).